Here is a 50-residue protein sequence, read N- to C-terminus: Defensin D2 (50 aa).

Cystine bridges form between Cys-3-Cys-50, Cys-14-Cys-35, Cys-20-Cys-44, and Cys-24-Cys-46.

Contains 4 disulfide bonds.

The protein resides in the secreted. Its function is as follows. Antimicrobial peptide active against fungi, Gram-positive and Gram-negative bacteria. Inhibits growth of hyphae in the fungi A.niger (IC(50)=3.5 ug/ml), B.sorokiniana (IC(50)=1.8 ug/ml), F.oxysporum (IC(50)=5.3 ug/ml), F.graminearum (IC(50)=6.9 ug/ml), F.culmorum (IC(50)=6.9 ug/ml) and B.cinerea (IC(50)=13.7 ug/ml). Has no effect on spore germination. Destroys spores in germinated conidia by disruption of cell walls and membranes in A.niger and B.sorokiniana. Causes vacuolization of germinated macro- and microconidia in F.oxysporum, F.graminearum and F.culmorum. Strongly inhibits growth of P.infestans on potato tubers above concentrations of 3.4 ug/ml. Inhibits growth of Gram-positive bacteria C.michiganensis and B.subtilis and of Gram-negative bacteria P.syringae, E.carotovora and E.coli. The chain is Defensin D2 from Nigella sativa (Black cumin).